A 466-amino-acid chain; its full sequence is Ribulose bisphosphate carboxylase large chain (466 aa).

Position 5 is an N6,N6,N6-trimethyllysine (K5). Substrate contacts are provided by N114 and T164. The active-site Proton acceptor is K166. K168 provides a ligand contact to substrate. Residues K192, D194, and E195 each contribute to the Mg(2+) site. At K192 the chain carries N6-carboxylysine. The active-site Proton acceptor is the H285. R286, H318, and S370 together coordinate substrate.

It belongs to the RuBisCO large chain family. Type I subfamily. Heterohexadecamer of 8 large chains and 8 small chains; disulfide-linked. The disulfide link is formed within the large subunit homodimers. It depends on Mg(2+) as a cofactor. In terms of processing, the disulfide bond which can form in the large chain dimeric partners within the hexadecamer appears to be associated with oxidative stress and protein turnover.

The protein resides in the plastid. The protein localises to the chloroplast. The catalysed reaction is 2 (2R)-3-phosphoglycerate + 2 H(+) = D-ribulose 1,5-bisphosphate + CO2 + H2O. It catalyses the reaction D-ribulose 1,5-bisphosphate + O2 = 2-phosphoglycolate + (2R)-3-phosphoglycerate + 2 H(+). Its function is as follows. RuBisCO catalyzes two reactions: the carboxylation of D-ribulose 1,5-bisphosphate, the primary event in carbon dioxide fixation, as well as the oxidative fragmentation of the pentose substrate in the photorespiration process. Both reactions occur simultaneously and in competition at the same active site. This Gonopterodendron arboreum (Maracaibo lignum-vitae) protein is Ribulose bisphosphate carboxylase large chain.